The primary structure comprises 233 residues: MSNLSNLRHKLQNGLIASCQPVPGSAMDTPEIVAAMACAALAGGAVGLRIEGISNIQAVRRATDAPIIGIIKRDLPDSEVRITPWLEDIDALSAAGADIIAFDVTCRERPVSVADLYQRARATGCLTMADASNIDDGLLAHHLGIDFIGTTLSGYTQATVPTEPDLALVTQLAQAGCRVIAEGRYHSPALAAAAISAGAYAVTVGSAITRIEHICGWFCDAIKQCETEKLTEY.

The protein belongs to the NanE family.

It carries out the reaction an N-acyl-D-glucosamine 6-phosphate = an N-acyl-D-mannosamine 6-phosphate. It functions in the pathway amino-sugar metabolism; N-acetylneuraminate degradation; D-fructose 6-phosphate from N-acetylneuraminate: step 3/5. Converts N-acetylmannosamine-6-phosphate (ManNAc-6-P) to N-acetylglucosamine-6-phosphate (GlcNAc-6-P). The chain is Putative N-acetylmannosamine-6-phosphate 2-epimerase from Yersinia pestis bv. Antiqua (strain Antiqua).